Here is a 379-residue protein sequence, read N- to C-terminus: Sialidase-2 (379 aa).

The short motif at 20-23 is the FRIP motif element; sequence YRIP. Substrate is bound by residues arginine 21 and arginine 41. Residue aspartate 46 is the Proton acceptor of the active site. The BNR 1 repeat unit spans residues 127–138; the sequence is VTSTDYGMNWSP. The substrate site is built by tyrosine 179 and tyrosine 181. The stretch at 197 to 208 is one BNR 2 repeat; sequence FISLDHGHTWEL. Residues glutamate 218, arginine 237, and arginine 303 each contribute to the substrate site. Catalysis depends on tyrosine 333, which acts as the Nucleophile. Glutamate 354 is an active-site residue.

Belongs to the glycosyl hydrolase 33 family. Detected in skeletal muscle.

The protein resides in the cytoplasm. It localises to the cytosol. The enzyme catalyses Hydrolysis of alpha-(2-&gt;3)-, alpha-(2-&gt;6)-, alpha-(2-&gt;8)- glycosidic linkages of terminal sialic acid residues in oligosaccharides, glycoproteins, glycolipids, colominic acid and synthetic substrates.. It catalyses the reaction a ganglioside GD1a + H2O = a ganglioside GM1 + N-acetylneuraminate. The catalysed reaction is a ganglioside GM1 + H2O = a ganglioside GA1 + N-acetylneuraminate. It carries out the reaction a ganglioside GT1b + H2O = a ganglioside GD1b + N-acetylneuraminate. The enzyme catalyses a ganglioside GD1b + H2O = a ganglioside GM1 + N-acetylneuraminate. It catalyses the reaction a ganglioside GD3 + H2O = a ganglioside GM3 + N-acetylneuraminate. The catalysed reaction is a ganglioside GM3 + H2O = a beta-D-galactosyl-(1-&gt;4)-beta-D-glucosyl-(1&lt;-&gt;1)-ceramide + N-acetylneuraminate. It carries out the reaction a ganglioside GM2 + H2O = a ganglioside GA2 + N-acetylneuraminate. The enzyme catalyses a neolactoside IV(3)-alpha-NeuAc-nLc4Cer(d18:1(4E)) + H2O = a neolactoside nLc4Cer(d18:1(4E)) + N-acetylneuraminate. It catalyses the reaction N-acetyl-alpha-neuraminosyl-(2-&gt;3)-beta-D-galactosyl-(1-&gt;4)-D-glucose + H2O = lactose + N-acetylneuraminate. In terms of biological role, exo-alpha-sialidase that catalyzes the hydrolytic cleavage of the terminal sialic acid (N-acetylneuraminic acid, Neu5Ac) of a glycan moiety in the catabolism of glycolipids, glycoproteins and oligosacharides. Recognizes sialyl linkage positions of the glycan moiety as well as the supramolecular organization of the sialoglycoconjugate. Displays preference for alpha-(2-&gt;3)-sialylated GD1a and GT1B gangliosides over alpha-(2-&gt;8)-sialylated GD1b, in both monomeric forms and micelles. Hydrolyzes monomeric GM1 ganglioside, but has no activity toward the miscellar form. Has lower sialidase activity for glycoproteins such as fetuin and TF/transferrin that carry a mixture of alpha-(2-&gt;3) and alpha-(2-&gt;6)-sialyl linkages. Cleaves milk oligosaccharide alpha-(2-&gt;3)-sialyllactose, but is inactive toward alpha-(2-&gt;6)-sialyllactose isomer. Has no activity toward colominic acid, a homomer of alpha-(2-&gt;8)-linked Neu5Ac residues. This Rattus norvegicus (Rat) protein is Sialidase-2 (Neu2).